The chain runs to 511 residues: Ribosome biogenesis protein YTM1 (511 aa).

The interval 9 to 112 (VKVVFVTRDE…EVSLSIEYIR (104 aa)) is ubiquitin-like (UBL) domain. Positions 122–511 (SFSNPDWVAA…IQINNNPQSA (390 aa)) are sufficient for interaction with ERB1 and association with 66S pre-ribosomes. 7 WD repeats span residues 124–168 (SNPD…TGQL), 170–208 (GHNS…YRRK), 248–287 (GHTA…MPAI), 332–372 (GHSA…AVQS), 383–423 (TRST…QVAT), 429–470 (GHTN…SLHV), and 477–511 (TENN…PQSA). Positions 207-228 (RKEPGQVGKKELNYDSEEDSDE) are disordered. The span at 208–219 (KEPGQVGKKELN) shows a compositional bias: basic and acidic residues.

Belongs to the WD repeat WDR12/YTM1 family. In terms of assembly, component of the NOP7 complex, composed of ERB1, NOP7 and YTM1. The complex is held together by ERB1, which interacts with NOP7 via its N-terminal domain and with YTM1 via a high-affinity interaction between the seven-bladed beta-propeller domains of the 2 proteins. The NOP7 complex associates with the 66S pre-ribosome. Interacts (via UBL domain) with MDN1 (via VWFA/MIDAS domain).

Its subcellular location is the nucleus. The protein localises to the nucleolus. The protein resides in the nucleoplasm. Its function is as follows. Component of the NOP7 complex, which is required for maturation of the 25S and 5.8S ribosomal RNAs and formation of the 60S ribosome. This chain is Ribosome biogenesis protein YTM1, found in Yarrowia lipolytica (strain CLIB 122 / E 150) (Yeast).